We begin with the raw amino-acid sequence, 293 residues long: Pyridoxal 5'-phosphate synthase subunit PdxS (293 aa).

D-ribose 5-phosphate is bound at residue D23. Catalysis depends on K80, which acts as the Schiff-base intermediate with D-ribose 5-phosphate. G152 is a D-ribose 5-phosphate binding site. R164 is a D-glyceraldehyde 3-phosphate binding site. D-ribose 5-phosphate contacts are provided by residues G213 and G234–S235.

The protein belongs to the PdxS/SNZ family. In the presence of PdxT, forms a dodecamer of heterodimers.

It catalyses the reaction aldehydo-D-ribose 5-phosphate + D-glyceraldehyde 3-phosphate + L-glutamine = pyridoxal 5'-phosphate + L-glutamate + phosphate + 3 H2O + H(+). It functions in the pathway cofactor biosynthesis; pyridoxal 5'-phosphate biosynthesis. Catalyzes the formation of pyridoxal 5'-phosphate from ribose 5-phosphate (RBP), glyceraldehyde 3-phosphate (G3P) and ammonia. The ammonia is provided by the PdxT subunit. Can also use ribulose 5-phosphate and dihydroxyacetone phosphate as substrates, resulting from enzyme-catalyzed isomerization of RBP and G3P, respectively. The sequence is that of Pyridoxal 5'-phosphate synthase subunit PdxS from Methanothermobacter thermautotrophicus (strain ATCC 29096 / DSM 1053 / JCM 10044 / NBRC 100330 / Delta H) (Methanobacterium thermoautotrophicum).